Consider the following 62-residue polypeptide: Temporin-1PLa (62 aa).

Positions 1 to 22 are cleaved as a signal peptide; sequence MFTSKKSLLLLFFLGTINLSLC. Residues 23–45 constitute a propeptide that is removed on maturation; sequence EEERDADEEERRDDPDEMNVEVE. At isoleucine 60 the chain carries Isoleucine amide.

Expressed by the skin glands.

It is found in the secreted. In terms of biological role, antimicrobial activity against the Gram-positive bacterium S.aureus. This is Temporin-1PLa from Lithobates palustris (Pickerel frog).